Here is a 398-residue protein sequence, read N- to C-terminus: ATP-dependent RNA helicase eIF4A (398 aa).

The Q motif signature appears at 25-53 (DSFDAMNLRAELLRGVYAYGFERPSAIQQ). A Helicase ATP-binding domain is found at 56–226 (IMPVIKGSDV…TKFMRDPVRI (171 aa)). Position 69–76 (69–76 (AQSGTGKT)) interacts with ATP. Residues 174 to 177 (DEAD) carry the DEAD box motif. The Helicase C-terminal domain maps to 237–398 (GIKQFYIAVE…EMPMNVADLI (162 aa)).

The protein belongs to the DEAD box helicase family. eIF4A subfamily. Component of the eIF4F complex, which composition varies with external and internal environmental conditions. It is composed of at least eIF4A, eIF4E and eIF4G.

The protein resides in the cytoplasm. It carries out the reaction ATP + H2O = ADP + phosphate + H(+). ATP-dependent RNA helicase which is a subunit of the eIF4F complex involved in cap recognition and is required for mRNA binding to ribosome. In the current model of translation initiation, eIF4A unwinds RNA secondary structures in the 5'-UTR of mRNAs which is necessary to allow efficient binding of the small ribosomal subunit, and subsequent scanning for the initiator codon. The chain is ATP-dependent RNA helicase eIF4A (TIF1) from Coccidioides immitis (strain RS) (Valley fever fungus).